Consider the following 313-residue polypeptide: Testis-expressed protein 264 (313 aa).

Residues 1 to 6 (MSDLLL) are Lumenal-facing. The helical; Signal-anchor for type III membrane protein transmembrane segment at 7 to 31 (LGLIGGLTLLLLLTLLAFAGYSGLL) threads the bilayer. Residues 32-313 (AGVEVSAGSP…EPTAPEKGKE (282 aa)) lie on the Cytoplasmic side of the membrane. The segment at 193-313 (PEMKETEWKW…EPTAPEKGKE (121 aa)) is disordered. Residues 219–247 (DTMSDTSSVSLEVSPGSRETSAATLSPGA) show a composition bias toward polar residues. Phosphoserine is present on residues Ser-239 and Ser-244. The segment covering 251 to 263 (GWDDGDTRSEHSY) has biased composition (basic and acidic residues). Positions 264 to 273 (SESGASGSSF) are enriched in low complexity. The LIR motif motif lies at 273-276 (FEEL).

As to quaternary structure, interacts (via the LIR motif) with ATG8 family proteins MAP1LC3A, MAP1LC3B, GABARAP and GABARAPL1. Interacts with VCP/p97; bridging VCP/p97 to covalent DNA-protein cross-links (DPCs). Interacts with TOP1 (when sumoylated).

Its subcellular location is the endoplasmic reticulum membrane. The protein resides in the cytoplasmic vesicle. The protein localises to the autophagosome. It is found in the cytoplasm. It localises to the cytosol. Its subcellular location is the nucleus. The protein resides in the chromosome. Its function is as follows. Major reticulophagy (also called ER-phagy) receptor that acts independently of other candidate reticulophagy receptors to remodel subdomains of the endoplasmic reticulum into autophagosomes upon nutrient stress, which then fuse with lysosomes for endoplasmic reticulum turnover. The ATG8-containing isolation membrane (IM) cradles a tubular segment of TEX264-positive ER near a three-way junction, allowing the formation of a synapse of 2 juxtaposed membranes with trans interaction between the TEX264 and ATG8 proteins. Expansion of the IM would extend the capture of ER, possibly through a 'zipper-like' process involving continued trans TEX264-ATG8 interactions, until poorly understood mechanisms lead to the fission of relevant membranes and, ultimately, autophagosomal membrane closure. Also involved in the repair of covalent DNA-protein cross-links (DPCs) during DNA synthesis: acts by bridging VCP/p97 to covalent DNA-protein cross-links (DPCs) and initiating resolution of DPCs by SPRTN. In Homo sapiens (Human), this protein is Testis-expressed protein 264.